A 72-amino-acid polypeptide reads, in one-letter code: Neuropeptide SIFamide (72 aa).

An N-terminal signal peptide occupies residues 1-26; it reads MALRFTLTLLLVTILVAAILLGSSEA. N-linked (GlcNAc...) asparagine glycosylation occurs at asparagine 34. Phenylalanine 38 is modified (phenylalanine amide). A propeptide spanning residues 42 to 72 is cleaved from the precursor; that stretch reads NSLDYDSAKMSAVCEVAMEACPMWFPQNDSK.

It belongs to the FARP (FMRFamide related peptide) family. As to expression, strongly expressed in two pairs of neurons in the pars intercerebralis (at protein level).

It is found in the secreted. Functionally, ligand for the neuropeptide SIFamide receptor. Modulates sexual behavior by negatively regulating female receptivity to male courtship and by playing a role in male sex discrimination. Also involved in promoting sleep. The protein is Neuropeptide SIFamide of Drosophila melanogaster (Fruit fly).